A 311-amino-acid chain; its full sequence is Aspartate carbamoyltransferase catalytic subunit (311 aa).

2 residues coordinate carbamoyl phosphate: Arg55 and Thr56. Lys85 serves as a coordination point for L-aspartate. Carbamoyl phosphate-binding residues include Arg106, His135, and Gln138. The L-aspartate site is built by Arg168 and Arg230. Carbamoyl phosphate-binding residues include Leu268 and Pro269.

Belongs to the aspartate/ornithine carbamoyltransferase superfamily. ATCase family. As to quaternary structure, heterododecamer (2C3:3R2) of six catalytic PyrB chains organized as two trimers (C3), and six regulatory PyrI chains organized as three dimers (R2).

The catalysed reaction is carbamoyl phosphate + L-aspartate = N-carbamoyl-L-aspartate + phosphate + H(+). It participates in pyrimidine metabolism; UMP biosynthesis via de novo pathway; (S)-dihydroorotate from bicarbonate: step 2/3. In terms of biological role, catalyzes the condensation of carbamoyl phosphate and aspartate to form carbamoyl aspartate and inorganic phosphate, the committed step in the de novo pyrimidine nucleotide biosynthesis pathway. The chain is Aspartate carbamoyltransferase catalytic subunit from Citrobacter koseri (strain ATCC BAA-895 / CDC 4225-83 / SGSC4696).